A 502-amino-acid polypeptide reads, in one-letter code: Glycerol kinase (502 aa).

An ADP-binding site is contributed by Thr14. Residues Thr14, Thr15, and Ser16 each contribute to the ATP site. Thr14 is a binding site for sn-glycerol 3-phosphate. Residue Arg18 participates in ADP binding. The sn-glycerol 3-phosphate site is built by Arg84, Glu85, Tyr136, and Asp246. Positions 84, 85, 136, 246, and 247 each coordinate glycerol. ADP is bound by residues Thr268 and Gly311. ATP is bound by residues Thr268, Gly311, Gln315, and Gly412. ADP contacts are provided by Gly412 and Asn416.

Belongs to the FGGY kinase family. As to quaternary structure, homotetramer and homodimer (in equilibrium). Heterodimer with EIIA-Glc. Binds 1 zinc ion per glycerol kinase EIIA-Glc dimer. The zinc ion is important for dimerization.

The catalysed reaction is glycerol + ATP = sn-glycerol 3-phosphate + ADP + H(+). It participates in polyol metabolism; glycerol degradation via glycerol kinase pathway; sn-glycerol 3-phosphate from glycerol: step 1/1. Its activity is regulated as follows. Activity of this regulatory enzyme is affected by several metabolites. Allosterically and non-competitively inhibited by fructose 1,6-bisphosphate (FBP) and unphosphorylated phosphocarrier protein EIIA-Glc (III-Glc), an integral component of the bacterial phosphotransferase (PTS) system. Its function is as follows. Key enzyme in the regulation of glycerol uptake and metabolism. Catalyzes the phosphorylation of glycerol to yield sn-glycerol 3-phosphate. The chain is Glycerol kinase from Escherichia coli O127:H6 (strain E2348/69 / EPEC).